Reading from the N-terminus, the 227-residue chain is Cytochrome c oxidase subunit 2 (227 aa).

Residues 1–14 lie on the Mitochondrial intermembrane side of the membrane; the sequence is MAHPVQLGLQDATS. A helical membrane pass occupies residues 15-45; the sequence is PVMEELITFHDYALMTISLISFLVLYALFST. The Mitochondrial matrix segment spans residues 46 to 59; sequence LTTKLTNTNITDAQ. Residues 60–87 form a helical membrane-spanning segment; the sequence is EMETTWTILPAVILILIALPSLRILYLT. Over 88–227 the chain is Mitochondrial intermembrane; it reads DEINNPSFTI…IFEMGPVFTL (140 aa). Cu cation-binding residues include H161, C196, E198, C200, H204, and M207. E198 lines the Mg(2+) pocket.

This sequence belongs to the cytochrome c oxidase subunit 2 family. As to quaternary structure, component of the cytochrome c oxidase (complex IV, CIV), a multisubunit enzyme composed of 14 subunits. The complex is composed of a catalytic core of 3 subunits MT-CO1, MT-CO2 and MT-CO3, encoded in the mitochondrial DNA, and 11 supernumerary subunits COX4I, COX5A, COX5B, COX6A, COX6B, COX6C, COX7A, COX7B, COX7C, COX8 and NDUFA4, which are encoded in the nuclear genome. The complex exists as a monomer or a dimer and forms supercomplexes (SCs) in the inner mitochondrial membrane with NADH-ubiquinone oxidoreductase (complex I, CI) and ubiquinol-cytochrome c oxidoreductase (cytochrome b-c1 complex, complex III, CIII), resulting in different assemblies (supercomplex SCI(1)III(2)IV(1) and megacomplex MCI(2)III(2)IV(2)). Found in a complex with TMEM177, COA6, COX18, COX20, SCO1 and SCO2. Interacts with TMEM177 in a COX20-dependent manner. Interacts with COX20. Interacts with COX16. It depends on Cu cation as a cofactor.

It is found in the mitochondrion inner membrane. It carries out the reaction 4 Fe(II)-[cytochrome c] + O2 + 8 H(+)(in) = 4 Fe(III)-[cytochrome c] + 2 H2O + 4 H(+)(out). In terms of biological role, component of the cytochrome c oxidase, the last enzyme in the mitochondrial electron transport chain which drives oxidative phosphorylation. The respiratory chain contains 3 multisubunit complexes succinate dehydrogenase (complex II, CII), ubiquinol-cytochrome c oxidoreductase (cytochrome b-c1 complex, complex III, CIII) and cytochrome c oxidase (complex IV, CIV), that cooperate to transfer electrons derived from NADH and succinate to molecular oxygen, creating an electrochemical gradient over the inner membrane that drives transmembrane transport and the ATP synthase. Cytochrome c oxidase is the component of the respiratory chain that catalyzes the reduction of oxygen to water. Electrons originating from reduced cytochrome c in the intermembrane space (IMS) are transferred via the dinuclear copper A center (CU(A)) of subunit 2 and heme A of subunit 1 to the active site in subunit 1, a binuclear center (BNC) formed by heme A3 and copper B (CU(B)). The BNC reduces molecular oxygen to 2 water molecules using 4 electrons from cytochrome c in the IMS and 4 protons from the mitochondrial matrix. The chain is Cytochrome c oxidase subunit 2 (MT-CO2) from Chlorocebus aethiops (Green monkey).